The sequence spans 249 residues: UDP-N-acetyl-D-mannosaminuronic acid transferase (249 aa).

It belongs to the glycosyltransferase 26 family.

The enzyme catalyses UDP-N-acetyl-alpha-D-mannosaminouronate + N-acetyl-alpha-D-glucosaminyl-di-trans,octa-cis-undecaprenyl diphosphate = beta-D-ManNAcA-(1-&gt;4)-alpha-D-GlcNAc-di-trans,octa-cis-undecaprenyl diphosphate + UDP + H(+). The protein operates within bacterial outer membrane biogenesis; enterobacterial common antigen biosynthesis. Catalyzes the synthesis of Und-PP-GlcNAc-ManNAcA (Lipid II), the second lipid-linked intermediate involved in enterobacterial common antigen (ECA) synthesis. The sequence is that of UDP-N-acetyl-D-mannosaminuronic acid transferase from Pectobacterium carotovorum subsp. carotovorum (strain PC1).